A 458-amino-acid polypeptide reads, in one-letter code: F-box/LRR-repeat protein At5g02910 (458 aa).

The 47-residue stretch at 10 to 56 (MDFISSLPDEILHHILSSVPTKSAIRTSLLSKRWRYVWSETPSLSID) folds into the F-box domain. 8 LRR repeats span residues 57–84 (CRRA…HLHT), 86–112 (LLNR…SLES), 133–161 (KQLF…LSLS), 162–187 (NCTL…ELLY), 226–251 (CLRL…DLNI), 260–285 (TAGF…TIGG), 325–353 (KLLR…HLND), and 389–414 (ESNL…VVLL).

This is F-box/LRR-repeat protein At5g02910 from Arabidopsis thaliana (Mouse-ear cress).